The following is a 112-amino-acid chain: Ribosomal processing cysteine protease Prp (112 aa).

Histidine 22 serves as the catalytic Proton donor. The active-site Nucleophile is cysteine 34.

This sequence belongs to the Prp family. Homodimer.

In terms of biological role, an essential cysteine protease that cleaves the N-terminus from ribosomal protein bL27. The chain is Ribosomal processing cysteine protease Prp from Bacillus subtilis (strain 168).